A 397-amino-acid polypeptide reads, in one-letter code: Xylose isomerase (397 aa).

Active-site residues include His54 and Asp57. Mg(2+)-binding residues include Glu181, Glu217, His220, Asp245, Asp255, Asp257, and Asp293.

This sequence belongs to the xylose isomerase family. In terms of assembly, homotetramer. Mg(2+) serves as cofactor.

It is found in the cytoplasm. The enzyme catalyses alpha-D-xylose = alpha-D-xylulofuranose. The polypeptide is Xylose isomerase (Clavibacter michiganensis subsp. michiganensis (strain NCPPB 382)).